The chain runs to 666 residues: Neurexin-2-beta (666 aa).

Gly residues predominate over residues methionine 1–glycine 10. The interval methionine 1 to proline 30 is disordered. A signal peptide spans methionine 1 to glycine 50. Pro residues predominate over residues proline 21 to proline 30. Over alanine 51 to threonine 590 the chain is Extracellular. One can recognise a Laminin G-like domain in the interval threonine 91–serine 299. Ca(2+)-binding residues include aspartate 143 and valine 160. Asparagine 190 carries an N-linked (GlcNAc...) asparagine glycan. Ca(2+) contacts are provided by isoleucine 242 and asparagine 244. Residues alanine 327 to asparagine 346 form a disordered region. Serine 354 is a glycosylation site (O-linked (Xyl...) (heparan sulfate) serine). Disordered regions lie at residues alanine 412–proline 443 and threonine 479–valine 580. Residues glycine 591–methionine 611 traverse the membrane as a helical segment. Residues tyrosine 612 to valine 666 lie on the Cytoplasmic side of the membrane. Positions asparagine 633 to valine 666 are disordered.

Belongs to the neurexin family. As to quaternary structure, interacts (via cytoplasmic C-terminal region) with CASK. Specific isoforms bind alpha-dystroglycan and neuroligins NLGN1, NLGN2 and NLGN3. Interacts with CBLN1, CBLN2 and, less avidly, with CBLN4. Interacts with CLSTN3. Post-translationally, O-glycosylated; contains heparan sulfate. Heparan sulfate attachment is required for synapse development by mediating interactions with neuroligins.

It localises to the presynaptic cell membrane. Functionally, neuronal cell surface protein that may be involved in cell recognition and cell adhesion. The chain is Neurexin-2-beta (NRXN2) from Homo sapiens (Human).